The primary structure comprises 58 residues: Histatherin (58 aa).

The N-terminal stretch at 1–19 (MKIFIFIFIMALILAMIRA) is a signal peptide.

Belongs to the histatin/statherin family. As to expression, expressed in mammary glands.

It is found in the secreted. The chain is Histatherin from Bos taurus (Bovine).